Consider the following 345-residue polypeptide: Uroporphyrinogen decarboxylase (345 aa).

Substrate-binding positions include 27–31 (RQAGR), Phe-46, Asp-76, Tyr-152, Ser-207, and His-321.

This sequence belongs to the uroporphyrinogen decarboxylase family. Homodimer.

It localises to the cytoplasm. The enzyme catalyses uroporphyrinogen III + 4 H(+) = coproporphyrinogen III + 4 CO2. The protein operates within porphyrin-containing compound metabolism; protoporphyrin-IX biosynthesis; coproporphyrinogen-III from 5-aminolevulinate: step 4/4. Functionally, catalyzes the decarboxylation of four acetate groups of uroporphyrinogen-III to yield coproporphyrinogen-III. In Staphylococcus aureus (strain bovine RF122 / ET3-1), this protein is Uroporphyrinogen decarboxylase.